Reading from the N-terminus, the 138-residue chain is FUN14 domain-containing protein fndc-1 (138 aa).

2 helical membrane-spanning segments follow: residues 37–56 and 61–78; these read PMVQLGVGAGFGTVTGYFVT and LVAATVGISFLLAQFAIH. N-linked (GlcNAc...) asparagine glycans are attached at residues asparagine 85 and asparagine 111.

This sequence belongs to the FUN14 family. Broadly expressed in somatic tissues. Expressed in the hermaphrodite spermatheca and male gonad. Expressed in spermatids, but not expressed in oocytes.

The protein localises to the mitochondrion outer membrane. Functionally, mitophagy receptor which plays a role in paternal mitochondria degradation in embryos after the two-cell stage. This chain is FUN14 domain-containing protein fndc-1, found in Caenorhabditis elegans.